We begin with the raw amino-acid sequence, 1202 residues long: DNA-directed RNA polymerase subunit beta (1202 aa).

Belongs to the RNA polymerase beta chain family. In terms of assembly, the RNAP catalytic core consists of 2 alpha, 1 beta, 1 beta' and 1 omega subunit. When a sigma factor is associated with the core the holoenzyme is formed, which can initiate transcription.

The catalysed reaction is RNA(n) + a ribonucleoside 5'-triphosphate = RNA(n+1) + diphosphate. In terms of biological role, DNA-dependent RNA polymerase catalyzes the transcription of DNA into RNA using the four ribonucleoside triphosphates as substrates. The polypeptide is DNA-directed RNA polymerase subunit beta (Leuconostoc mesenteroides subsp. mesenteroides (strain ATCC 8293 / DSM 20343 / BCRC 11652 / CCM 1803 / JCM 6124 / NCDO 523 / NBRC 100496 / NCIMB 8023 / NCTC 12954 / NRRL B-1118 / 37Y)).